The chain runs to 359 residues: DNA-directed RNA polymerase RPB3-11 homolog (359 aa).

This sequence in the N-terminal section; belongs to the archaeal RpoD/eukaryotic RPB3 RNA polymerase subunit family. The protein in the C-terminal section; belongs to the archaeal RpoL/eukaryotic RPB11/RPC19 RNA polymerase subunit family. Part of the viral DNA-directed RNA polymerase that consists of 8 polII-like subunits (RPB1, RPB2, RPB3, RPB5, RPB6, RPB7, RPB9, RPB10), a capping enzyme and a termination factor.

The protein resides in the host cytoplasm. Its subcellular location is the virion. In terms of biological role, component of the DNA-directed RNA polymerase (RNAP) that catalyzes the transcription in the cytoplasm of viral DNA into RNA using the four ribonucleoside triphosphates as substrates. In Ornithodoros (relapsing fever ticks), this protein is DNA-directed RNA polymerase RPB3-11 homolog.